Reading from the N-terminus, the 671-residue chain is Solute carrier family 5 member 4 (671 aa).

Over 1 to 38 the chain is Cytoplasmic; sequence MPAMGTALPRAMASTASVSTSTGSSELSSLSDNINNPA. A helical transmembrane segment spans residues 39 to 59; the sequence is DISVIVIYFVVVMAVGVWAMV. At 60–65 the chain is on the extracellular side; sequence KTNRST. The chain crosses the membrane as a helical span at residues 66–86; it reads VGGFFLAGRSMTWWPMGASLF. Topologically, residues 87–89 are cytoplasmic; the sequence is ASN. A helical membrane pass occupies residues 90 to 110; it reads IGSGHFVGLAGTGAATGIAVT. Residues 111–116 are Extracellular-facing; the sequence is AFESHS. The chain crosses the membrane as a helical span at residues 117–137; it reads FALLLVLGWFFVPIYIKAGVM. Residues 138 to 159 lie on the Cytoplasmic side of the membrane; sequence TMPEYLRKRFGGKRLQIYLSVL. A helical transmembrane segment spans residues 160–180; sequence SLFICVILTISADIFSGAIFI. A topological domain (extracellular) is located at residue K181. A helical transmembrane segment spans residues 182–202; it reads LALGLDLYLAIFILLAITAVF. At 203–218 the chain is on the cytoplasmic side; it reads TITGGLASVIYTDTLQ. The helical transmembrane segment at 219–239 threads the bilayer; sequence AIIMLVGSFILMIYAFVEVGG. Residues 240-288 lie on the Extracellular side of the membrane; sequence YESFTEKYMNAIPSVVEGDNLTISPKCYTPQPDSFHIFRDAVTGDIPWP. Residues 289-309 traverse the membrane as a helical segment; it reads GTAFGMPITALWYWCINQVIV. The Cytoplasmic portion of the chain corresponds to 310 to 324; it reads QRCLCGKNMSHVKAA. A helical membrane pass occupies residues 325 to 345; it reads CIVCGYLKLLPIFFMVMPGMI. The Extracellular portion of the chain corresponds to 346-378; that stretch reads SRILYTDMVACVVPSECVKQCGVDVGCTNYAYP. Residues 379-399 form a helical membrane-spanning segment; the sequence is MLVLKLMPMGLRGLMLSVMLA. At 400–434 the chain is on the cytoplasmic side; that stretch reads SLMSSLTSIFNSASTLFTMDLYTKIRKKASERELL. The chain crosses the membrane as a helical span at residues 435–455; that stretch reads IAGRLFVSVLIVTSILWVPIV. The Extracellular portion of the chain corresponds to 456–467; the sequence is EVSQGGQLIHYT. Residues 468–488 traverse the membrane as a helical segment; sequence EAISSYLGPPIAAVFLVAIFC. The Cytoplasmic segment spans residues 489–494; the sequence is KRVNEQ. The helical transmembrane segment at 495-515 threads the bilayer; it reads GAFWGLMVGLVLGLIRMIAEF. Over 516–537 the chain is Extracellular; it reads SYGTGSCLAPSSCPKVICGVHY. The chain crosses the membrane as a helical span at residues 538 to 558; sequence LYYAIILFFVSILVILGVSYL. The Cytoplasmic portion of the chain corresponds to 559-650; the sequence is TKPIPDVHLY…DTSEKPFWRT (92 aa). Acidic residues predominate over residues 583-593; sequence DLDAEDREENE. Residues 583 to 604 form a disordered region; that stretch reads DLDAEDREENEADARTEEDQTE. Residues 594–604 are compositionally biased toward basic and acidic residues; that stretch reads ADARTEEDQTE. The chain crosses the membrane as a helical span at residues 651-671; the sequence is VVNVNVIVLLAVAAFFYGYFA.

It belongs to the sodium:solute symporter (SSF) (TC 2.A.21) family.

It localises to the cell membrane. Generates D-glucose-induced depolarization in a pH-dependent and Na(+)-independent manner, with activity in acidic conditions (pH 5) but not neutral conditions. The chain is Solute carrier family 5 member 4 from Rattus norvegicus (Rat).